We begin with the raw amino-acid sequence, 156 residues long: Snaclec subunit B (156 aa).

An N-terminal signal peptide occupies residues 1 to 23 (MGRSIFVNLGLLVVAFSLRGSEA). Intrachain disulfides connect cysteine 25–cysteine 36, cysteine 53–cysteine 144, and cysteine 119–cysteine 136. Residues 32 to 145 (YDKYCYKVFD…CKSTLPFTCK (114 aa)) enclose the C-type lectin domain.

It belongs to the snaclec family. As to quaternary structure, heterodimer of subunits A and B; disulfide-linked. In terms of tissue distribution, expressed by the venom gland.

Its subcellular location is the secreted. In terms of biological role, interferes with one step of hemostasis (modulation of platelet aggregation, or coagulation cascade, for example). The polypeptide is Snaclec subunit B (Philodryas olfersii (Green snake)).